A 315-amino-acid polypeptide reads, in one-letter code: Neuroguidin (315 aa).

N-acetylalanine is present on A2. The stretch at 5–42 (EVLESDLPNAVALLKNLQEQVMAVTAQVQTLTKKVQAK) forms a coiled coil. Residues 41 to 174 (AKAYPTEKGL…KGTAKKYVPP (134 aa)) form a necessary for interaction with EIF4E region. 3 positions are modified to phosphoserine: S121, S142, and S143. Residues 123–174 (SENDPLRFKPHPSNMMSKLSSEDEEEDEAEEGQSGASGKKSGKGTAKKYVPP) are disordered. Over residues 144-153 (EDEEEDEAEE) the composition is skewed to acidic residues. Residues 181–205 (YDETEAEREKKRLERAKRRALSSSV) adopt a coiled-coil conformation. S204 and S214 each carry phosphoserine. Residues 252 to 315 (SKREKGRRKR…RKKKGFRRRR (64 aa)) form a disordered region. The segment covering 264–276 (VMSSQLHSLTHFS) has biased composition (polar residues). The span at 295 to 315 (TKKRKKIPKKGRKKKGFRRRR) shows a compositional bias: basic residues.

Belongs to the SAS10 family. Part of the small subunit (SSU) processome, composed of more than 70 proteins and the RNA chaperone small nucleolar RNA (snoRNA) U3. Interacts with CPEB1 and EIF4E.

Its subcellular location is the nucleus. The protein localises to the nucleolus. The protein resides in the chromosome. It localises to the centromere. It is found in the cytoplasm. Its subcellular location is the cell projection. The protein localises to the axon. The protein resides in the dendrite. It localises to the filopodium. Functionally, part of the small subunit (SSU) processome, first precursor of the small eukaryotic ribosomal subunit. During the assembly of the SSU processome in the nucleolus, many ribosome biogenesis factors, an RNA chaperone and ribosomal proteins associate with the nascent pre-rRNA and work in concert to generate RNA folding, modifications, rearrangements and cleavage as well as targeted degradation of pre-ribosomal RNA by the RNA exosome. Its dissociation from the complex determines the transition from state pre-A1 to state pre-A1*. Inhibits mRNA translation in a cytoplasmic polyadenylation element (CPE)-dependent manner. The chain is Neuroguidin (NGDN) from Bos taurus (Bovine).